The following is a 288-amino-acid chain: ATP synthase gamma chain (288 aa).

This sequence belongs to the ATPase gamma chain family. In terms of assembly, F-type ATPases have 2 components, CF(1) - the catalytic core - and CF(0) - the membrane proton channel. CF(1) has five subunits: alpha(3), beta(3), gamma(1), delta(1), epsilon(1). CF(0) has three main subunits: a, b and c.

Its subcellular location is the cell membrane. Produces ATP from ADP in the presence of a proton gradient across the membrane. The gamma chain is believed to be important in regulating ATPase activity and the flow of protons through the CF(0) complex. The protein is ATP synthase gamma chain of Staphylococcus epidermidis (strain ATCC 35984 / DSM 28319 / BCRC 17069 / CCUG 31568 / BM 3577 / RP62A).